We begin with the raw amino-acid sequence, 214 residues long: ATP phosphoribosyltransferase (214 aa).

Belongs to the ATP phosphoribosyltransferase family. Short subfamily. Heteromultimer composed of HisG and HisZ subunits.

The protein localises to the cytoplasm. The catalysed reaction is 1-(5-phospho-beta-D-ribosyl)-ATP + diphosphate = 5-phospho-alpha-D-ribose 1-diphosphate + ATP. The protein operates within amino-acid biosynthesis; L-histidine biosynthesis; L-histidine from 5-phospho-alpha-D-ribose 1-diphosphate: step 1/9. Functionally, catalyzes the condensation of ATP and 5-phosphoribose 1-diphosphate to form N'-(5'-phosphoribosyl)-ATP (PR-ATP). Has a crucial role in the pathway because the rate of histidine biosynthesis seems to be controlled primarily by regulation of HisG enzymatic activity. This Deinococcus deserti (strain DSM 17065 / CIP 109153 / LMG 22923 / VCD115) protein is ATP phosphoribosyltransferase.